A 520-amino-acid chain; its full sequence is Mu-like prophage FluMu protein gp29 (520 aa).

The protein to phage Mu protein gp29.

The polypeptide is Mu-like prophage FluMu protein gp29 (Haemophilus influenzae (strain ATCC 51907 / DSM 11121 / KW20 / Rd)).